The following is a 505-amino-acid chain: ATP synthase subunit alpha (505 aa).

170–177 (GDRQTGKT) is a binding site for ATP.

It belongs to the ATPase alpha/beta chains family. As to quaternary structure, F-type ATPases have 2 components, CF(1) - the catalytic core - and CF(0) - the membrane proton channel. CF(1) has five subunits: alpha(3), beta(3), gamma(1), delta(1), epsilon(1). CF(0) has four main subunits: a, b, b' and c.

The protein resides in the cellular thylakoid membrane. It carries out the reaction ATP + H2O + 4 H(+)(in) = ADP + phosphate + 5 H(+)(out). Produces ATP from ADP in the presence of a proton gradient across the membrane. The alpha chain is a regulatory subunit. This chain is ATP synthase subunit alpha, found in Cyanothece sp. (strain PCC 7425 / ATCC 29141).